Here is a 103-residue protein sequence, read N- to C-terminus: Integration host factor subunit alpha (103 aa).

Positions 50 to 72 are disordered; it reads GNFNLRDKGERPGRNPKTGEEIP. Positions 54 to 69 are enriched in basic and acidic residues; sequence LRDKGERPGRNPKTGE.

It belongs to the bacterial histone-like protein family. As to quaternary structure, heterodimer of an alpha and a beta chain.

Functionally, this protein is one of the two subunits of integration host factor, a specific DNA-binding protein that functions in genetic recombination as well as in transcriptional and translational control. The chain is Integration host factor subunit alpha from Coxiella burnetii (strain CbuK_Q154) (Coxiella burnetii (strain Q154)).